A 131-amino-acid chain; its full sequence is Agouti-related protein (131 aa).

An N-terminal signal peptide occupies residues 1-20 (MLTAMLLSCVLLLALPPTLG). Residues 21 to 81 (VQMGVAPLKG…VLDPQNRESR (61 aa)) constitute a propeptide that is removed on maturation. Cystine bridges form between Cys86-Cys101, Cys93-Cys107, Cys100-Cys118, Cys104-Cys128, and Cys109-Cys116. The region spanning 86–128 (CVRLHESCLGQQVPCCDPCATCYCRFFNAFCYCRKLGTATNLC) is the Agouti domain. The interval 110–112 (RFF) is interaction with melanocortin receptors.

As to quaternary structure, interacts with melanocortin receptors MC3R, MC4R and MC5R. In terms of tissue distribution, expressed in arcuate nucleus and median eminence, adrenal gland (medulla), hypothalamus, testis, and lung.

The protein resides in the secreted. The protein localises to the golgi apparatus lumen. Functionally, plays a role in weight homeostasis. Involved in the control of feeding behavior through the central melanocortin system. Acts as alpha melanocyte-stimulating hormone antagonist by inhibiting cAMP production mediated by stimulation of melanocortin receptors within the hypothalamus and adrenal gland. Has very low activity with MC5R. Is an inverse agonist for MC3R and MC4R being able to suppress their constitutive activity. It promotes MC3R and MC4R endocytosis in an arrestin-dependent manner. The polypeptide is Agouti-related protein (Agrp) (Mus musculus (Mouse)).